The sequence spans 948 residues: Putative JmjC domain-containing histone demethylation protein 1 (948 aa).

The 160-residue stretch at 243-402 (VSTTKLAYYV…PQLSIYNLEL (160 aa)) folds into the JmjC domain. T294 is a substrate binding site. Fe cation contacts are provided by H297 and E299. A substrate-binding site is contributed by K314.

Belongs to the JHDM1 histone demethylase family. The cofactor is Fe(2+).

It localises to the nucleus. It carries out the reaction N(6),N(6)-dimethyl-L-lysyl(36)-[histone H3] + 2 2-oxoglutarate + 2 O2 = L-lysyl(36)-[histone H3] + 2 formaldehyde + 2 succinate + 2 CO2. In terms of biological role, may be a histone demethylase that specifically demethylates 'Lys-36' of histone H3, thereby playing a central role in histone code. Represses transcriptional silencing by negatively affecting heterochromatin stability. This is Putative JmjC domain-containing histone demethylation protein 1 (jhd1) from Schizosaccharomyces pombe (strain 972 / ATCC 24843) (Fission yeast).